A 138-amino-acid polypeptide reads, in one-letter code: Translation initiation factor 5A (138 aa).

K37 bears the Hypusine mark.

This sequence belongs to the eIF-5A family.

It localises to the cytoplasm. Its function is as follows. Functions by promoting the formation of the first peptide bond. This Pyrococcus horikoshii (strain ATCC 700860 / DSM 12428 / JCM 9974 / NBRC 100139 / OT-3) protein is Translation initiation factor 5A (eif5a).